The sequence spans 211 residues: Dephospho-CoA kinase (211 aa).

Residues 2–204 (IIGLTGSIGM…SGVRRWRRGK (203 aa)) enclose the DPCK domain. 10 to 15 (GMGKST) contacts ATP.

The protein belongs to the CoaE family.

The protein localises to the cytoplasm. The catalysed reaction is 3'-dephospho-CoA + ATP = ADP + CoA + H(+). The protein operates within cofactor biosynthesis; coenzyme A biosynthesis; CoA from (R)-pantothenate: step 5/5. Catalyzes the phosphorylation of the 3'-hydroxyl group of dephosphocoenzyme A to form coenzyme A. This Rhodospirillum rubrum (strain ATCC 11170 / ATH 1.1.1 / DSM 467 / LMG 4362 / NCIMB 8255 / S1) protein is Dephospho-CoA kinase.